The following is a 205-amino-acid chain: Octanoyltransferase (205 aa).

Residues 30 to 205 (NSSDELVWLL…ILKKEFYKIF (176 aa)) form the BPL/LPL catalytic domain. Substrate-binding positions include 68 to 75 (RGGKYTYH), 140 to 142 (AFG), and 153 to 155 (GIA). Residue C171 is the Acyl-thioester intermediate of the active site.

Belongs to the LipB family.

Its subcellular location is the cytoplasm. The catalysed reaction is octanoyl-[ACP] + L-lysyl-[protein] = N(6)-octanoyl-L-lysyl-[protein] + holo-[ACP] + H(+). It functions in the pathway protein modification; protein lipoylation via endogenous pathway; protein N(6)-(lipoyl)lysine from octanoyl-[acyl-carrier-protein]: step 1/2. In terms of biological role, catalyzes the transfer of endogenously produced octanoic acid from octanoyl-acyl-carrier-protein onto the lipoyl domains of lipoate-dependent enzymes. Lipoyl-ACP can also act as a substrate although octanoyl-ACP is likely to be the physiological substrate. The protein is Octanoyltransferase of Wolbachia sp. subsp. Brugia malayi (strain TRS).